The sequence spans 452 residues: MSPQTETKASVGFKAGVKDYKLTYYTPDYETKDTDILAAFRVTPQPGVPPXXXXXXXXXESSTGTWTTVWTDGXTSLDRXXXXXXXXXXVPGEENQYIAYVAYPLDLFEEGSVTNMFTSIVGNVFGFKALRALRLEDLRIPPAYSKTFLGPPHGIQVERDKLNKYGRPLLGCTIKPKLGLSAKNYGRAVYECLRGGLDFTKDDENVNSQPFMRWRXXFLFCAEALYKAQAETGEIKGHYLNATAGTCEEMIKRAVFARELGVPIVMHDYLTGGFTANTSLAHYCRDNGLLLHIHRAMHAVIDRQKNHGXXFRVXXKALRMSGGDHIXXGTVVGKLEGDRESTLGFVDLLRDDYIEKDRSRGIFFTQDWVSMPGVIPVASGGIHVWHMPALTEIFGDDAVLQFGGGTLGHPWGNAPGAVANRVALEACVQARNEGRDLAVEGNEIIREASKWS.

A propeptide spanning residues 1–2 (MS) is cleaved from the precursor. Residue P3 is modified to N-acetylproline. Residue K14 is modified to N6,N6,N6-trimethyllysine. N123 and T173 together coordinate substrate. The active-site Proton acceptor is the K175. K177 serves as a coordination point for substrate. Residues K201, D203, and E204 each contribute to the Mg(2+) site. At K201 the chain carries N6-carboxylysine. H294 functions as the Proton acceptor in the catalytic mechanism. 3 residues coordinate substrate: R295, X327, and S379.

Belongs to the RuBisCO large chain family. Type I subfamily. Heterohexadecamer of 8 large chains and 8 small chains; disulfide-linked. The disulfide link is formed within the large subunit homodimers. It depends on Mg(2+) as a cofactor. The disulfide bond which can form in the large chain dimeric partners within the hexadecamer appears to be associated with oxidative stress and protein turnover.

It localises to the plastid. Its subcellular location is the chloroplast. It catalyses the reaction 2 (2R)-3-phosphoglycerate + 2 H(+) = D-ribulose 1,5-bisphosphate + CO2 + H2O. The catalysed reaction is D-ribulose 1,5-bisphosphate + O2 = 2-phosphoglycolate + (2R)-3-phosphoglycerate + 2 H(+). RuBisCO catalyzes two reactions: the carboxylation of D-ribulose 1,5-bisphosphate, the primary event in carbon dioxide fixation, as well as the oxidative fragmentation of the pentose substrate in the photorespiration process. Both reactions occur simultaneously and in competition at the same active site. The sequence is that of Ribulose bisphosphate carboxylase large chain from Salvadora persica (Toothbrush tree).